The primary structure comprises 248 residues: uncharacterized protein (248 aa).

An N-terminal signal peptide occupies residues 1–22 (MNKLQSYFIASVLYVMTPHAFA).

To E.coli YjbG.

This is an uncharacterized protein from Escherichia coli (strain K12).